Consider the following 231-residue polypeptide: A-type ATP synthase subunit D (231 aa).

The protein belongs to the V-ATPase D subunit family. Has multiple subunits with at least A(3), B(3), C, D, E, F, H, I and proteolipid K(x).

The protein localises to the cell membrane. Its function is as follows. Component of the A-type ATP synthase that produces ATP from ADP in the presence of a proton gradient across the membrane. The polypeptide is A-type ATP synthase subunit D (Methanobrevibacter smithii (strain ATCC 35061 / DSM 861 / OCM 144 / PS)).